Here is a 782-residue protein sequence, read N- to C-terminus: MRQKTLDVLDFDKIKAQVENEAVSDLGRVKAAAMTPASDYETVVFQMNETDELSQIYNKHRLPSLSGLTEVKPLIHRAKIGSILNVRELNQIKRLIQVQNQYKTFYSQLLEEEEAINYPILDERMAQLPILTDLYQEIHQKCDAYDLFDDASHELQSIRSRIHSTSQRIKQNLDRIVKSQSNQKKLSDAIITVRNDRHVIPVKAEYRQDFNGIVHDQSSSGQTLYIEPSAVVEMNNKISRLRNDEKVEVERILSVLSGEVAAEADACLIAESVMGQIDFLTAKARYGQSIKGTKPEFTEERNVYLPKAFHPLLDRATVVANTIEFAEDIQTVIITGPNTGGKTVTLKTLGLIIVMAQSGLLIPALDGSKLSVFDNVYCDIGDEQSIEQSLSTFSSHMKNIVEILKHADHNSLILFDELGAGTDPSEGAALAMSILDHVQKLGSLVMATTHYPELKAYSYNREGVMNASVEFDVNILSPTYKLLMGVPGRSNAFEISSKLGLSGNIIREAKSLIGQDEQEINNMIASLETNAKKVEDQRIELDRLLREAKQVHGDLNKKYEQYQNYEKQLMDDAKVKANQRVKAATKEADDIIKDLRHMRDEKNAEVKEHELIEKRKHLDEQYEGTDIKQNVKKQKWDEIQAGDEVKVLTYGQKGEVLEILDDDEAVVQMGIIKMKLPIADLEKKKKAQEKPAKTVSRTNRSAVKMELDLRGYRYEEAITALDQYLDQAMLSNYENVYIIHGKGTGALQKAVQQHLKKHKNVASFRTGMPSEGGFGVTVAELK.

336-343 (GPNTGGKT) contacts ATP. The Smr domain maps to 707-782 (LDLRGYRYEE…GFGVTVAELK (76 aa)).

This sequence belongs to the DNA mismatch repair MutS family. MutS2 subfamily. As to quaternary structure, homodimer. Binds to stalled ribosomes, contacting rRNA.

Endonuclease that is involved in the suppression of homologous recombination and thus may have a key role in the control of bacterial genetic diversity. Its function is as follows. Acts as a ribosome collision sensor, splitting the ribosome into its 2 subunits. Detects stalled/collided 70S ribosomes which it binds and splits by an ATP-hydrolysis driven conformational change. Acts upstream of the ribosome quality control system (RQC), a ribosome-associated complex that mediates the extraction of incompletely synthesized nascent chains from stalled ribosomes and their subsequent degradation. Probably generates substrates for RQC. This chain is Endonuclease MutS2, found in Staphylococcus carnosus (strain TM300).